A 449-amino-acid chain; its full sequence is Telomere resolvase ResT (449 aa).

No cofactors were found to be necessary. serves as cofactor.

The protein resides in the cytoplasm. Its subcellular location is the nucleoid. In terms of biological role, catalyzes the conservative, sequence-specific DNA breakage and reunion reaction that generates two hairpin telomeres from a replicated telomere substrate. Breaks two phosphodiester bonds in a single DNA duplex and joins each end with the opposite DNA strand to form covalently closed hairpin telomeres. In vitro relaxed-circular, open-circular and linearized plasmids, but not supercoiled DNA, are all substrates. Cleavage is position-dependent relative to conserved sequence elements. This Borreliella burgdorferi (strain ATCC 35210 / DSM 4680 / CIP 102532 / B31) (Borrelia burgdorferi) protein is Telomere resolvase ResT.